The following is a 48-amino-acid chain: Fimbrial assembly protein, serogroup F1 (48 aa).

This is Fimbrial assembly protein, serogroup F1 (fimB) from Dichelobacter nodosus (Bacteroides nodosus).